Reading from the N-terminus, the 790-residue chain is Alpha,alpha-trehalose-phosphate synthase [UDP-forming] B (790 aa).

This sequence in the N-terminal section; belongs to the glycosyltransferase 20 family. In the C-terminal section; belongs to the trehalose phosphatase family.

The enzyme catalyses D-glucose 6-phosphate + UDP-alpha-D-glucose = alpha,alpha-trehalose 6-phosphate + UDP + H(+). Functionally, synthesizes trehalose 6-phosphate, the precursor for the production of trehalose, the main carbohydrate storage reserve of the dormant spore. Trehalose accumulates in both prestalk and prespore cells and then is rapidly metabolized during terminal differentiation of stalk cells, while being stored in spores, where it serves as the principal energy and carbon source for germination. This chain is Alpha,alpha-trehalose-phosphate synthase [UDP-forming] B (tpsB), found in Dictyostelium discoideum (Social amoeba).